The chain runs to 245 residues: Proteasome subunit alpha type-7-1B (245 aa).

Belongs to the peptidase T1A family. As to quaternary structure, the 26S proteasome consists of a 20S proteasome core and two 19S regulatory subunits. The 20S proteasome core is composed of 28 subunits that are arranged in four stacked rings, resulting in a barrel-shaped structure. The two end rings are each formed by seven alpha subunits, and the two central rings are each formed by seven beta subunits. The catalytic chamber with the active sites is on the inside of the barrel. In terms of tissue distribution, testis specific.

Its subcellular location is the cytoplasm. The protein localises to the nucleus. Its function is as follows. The proteasome is a multicatalytic proteinase complex which is characterized by its ability to cleave peptides with Arg, Phe, Tyr, Leu, and Glu adjacent to the leaving group at neutral or slightly basic pH. The proteasome has an ATP-dependent proteolytic activity. This Drosophila virilis (Fruit fly) protein is Proteasome subunit alpha type-7-1B (Pros28.1B).